A 171-amino-acid chain; its full sequence is Transcription antitermination protein NusB (171 aa).

Belongs to the NusB family.

Functionally, involved in transcription antitermination. Required for transcription of ribosomal RNA (rRNA) genes. Binds specifically to the boxA antiterminator sequence of the ribosomal RNA (rrn) operons. The sequence is that of Transcription antitermination protein NusB from Brucella abortus (strain S19).